We begin with the raw amino-acid sequence, 346 residues long: UDP-3-O-acylglucosamine N-acyltransferase (346 aa).

H253 serves as the catalytic Proton acceptor.

It belongs to the transferase hexapeptide repeat family. LpxD subfamily. As to quaternary structure, homotrimer.

The enzyme catalyses a UDP-3-O-[(3R)-3-hydroxyacyl]-alpha-D-glucosamine + a (3R)-hydroxyacyl-[ACP] = a UDP-2-N,3-O-bis[(3R)-3-hydroxyacyl]-alpha-D-glucosamine + holo-[ACP] + H(+). It participates in bacterial outer membrane biogenesis; LPS lipid A biosynthesis. Catalyzes the N-acylation of UDP-3-O-acylglucosamine using 3-hydroxyacyl-ACP as the acyl donor. Is involved in the biosynthesis of lipid A, a phosphorylated glycolipid that anchors the lipopolysaccharide to the outer membrane of the cell. This is UDP-3-O-acylglucosamine N-acyltransferase from Rickettsia felis (strain ATCC VR-1525 / URRWXCal2) (Rickettsia azadi).